We begin with the raw amino-acid sequence, 301 residues long: Hydroxyquinol 1,2-dioxygenase (301 aa).

Positions 169, 202, 226, and 228 each coordinate Fe cation.

This sequence belongs to the intradiol ring-cleavage dioxygenase family. Requires Fe(3+) as cofactor.

It catalyses the reaction benzene-1,2,4-triol + O2 = maleylacetate + 2 H(+). It participates in aromatic compound metabolism. Functionally, involved in resorcinol degradation. Catalyzes the conversion of hydroxyquinol to malelylacetate. Also shows weak activity with catechol, 3-methylcatechol and 4-methylcatechol, but cannot use 4-chlorocatechol, 4-nitrocatechol or protocatechuate. The polypeptide is Hydroxyquinol 1,2-dioxygenase (Corynebacterium glutamicum (strain ATCC 13032 / DSM 20300 / JCM 1318 / BCRC 11384 / CCUG 27702 / LMG 3730 / NBRC 12168 / NCIMB 10025 / NRRL B-2784 / 534)).